Here is a 612-residue protein sequence, read N- to C-terminus: Zinc metalloproteinase-disintegrin-like HV1 (612 aa).

The signal sequence occupies residues 1-20 (MIQVLLVTICLAVFPYQGSS). A propeptide spanning residues 21-188 (IILESGNVND…SIKEDSQSNL (168 aa)) is cleaved from the precursor. The Peptidase M12B domain maps to 200–396 (KYVKFFLVAD…NMPQCILKKP (197 aa)). The N-linked (GlcNAc...) asparagine glycan is linked to Asn219. Intrachain disulfides connect Cys311/Cys391, Cys351/Cys375, and Cys353/Cys358. His336 contacts Zn(2+). Glu337 is an active-site residue. His340 and His346 together coordinate Zn(2+). The Disintegrin domain maps to 404–489 (PPVCGNYFVE…AECTDRFQRN (86 aa)). Ca(2+)-binding residues include Val406, Asn409, Phe411, Glu413, Glu416, and Asp419. Intrachain disulfides connect Cys407/Cys436, Cys418/Cys431, Cys420/Cys426, Cys430/Cys453, Cys444/Cys450, Cys449/Cys475, Cys462/Cys482, Cys469/Cys500, Cys493/Cys505, Cys512/Cys562, Cys527/Cys573, Cys540/Cys550, Cys557/Cys599, and Cys593/Cys605. Residues 468–470 (ECD) carry the D/ECD-tripeptide motif. The Ca(2+) site is built by Asp470, Met471, Asp473, Asp484, and Arg485. N-linked (GlcNAc...) asparagine glycosylation occurs at Asn502. Asn609 carries N-linked (GlcNAc...) asparagine glycosylation.

This sequence belongs to the venom metalloproteinase (M12B) family. P-III subfamily. P-IIIc sub-subfamily. In terms of assembly, homodimer; disulfide-linked. Zn(2+) serves as cofactor. Expressed by the venom gland.

It is found in the secreted. With respect to regulation, inhibited by EDTA and EGTA. Its function is as follows. Snake venom zinc metalloproteinase-disintegrin-like that potently activates prothrombin (F2). Does not elicit any hemorrhagic response. Barely inhibits collagen-induced platelet aggregation. Hydrolyzes the alpha-chain of fibrin and fibrinogen (FGA), without affecting the Bbeta- and gamma-chains. Induces apoptosis in cultured vascular endothelial cells. This Protobothrops flavoviridis (Habu) protein is Zinc metalloproteinase-disintegrin-like HV1.